Consider the following 827-residue polypeptide: Endoribonuclease YSH1 (827 aa).

Positions 96, 98, 100, 101, 184, and 205 each coordinate Zn(2+). The active-site Proton donor is the histidine 426. Histidine 448 provides a ligand contact to Zn(2+). The segment covering 583–592 (EDDVAEEEED) has biased composition (acidic residues). 2 disordered regions span residues 583–621 (EDDVAEEEEDKEVKQEVEDVTMEGEVKDETAEEVKKEEE) and 802–827 (DREENGEVKAEDEEKVKAEEKVKEEE). Over residues 606 to 621 (GEVKDETAEEVKKEEE) the composition is skewed to basic and acidic residues.

The protein belongs to the metallo-beta-lactamase superfamily. RNA-metabolizing metallo-beta-lactamase-like family. CPSF2/YSH1 subfamily.

It localises to the nucleus. Component of the cleavage factor I (CF I) involved in pre-mRNA 3'-end processing. This is Endoribonuclease YSH1 (YSH1) from Yarrowia lipolytica (strain CLIB 122 / E 150) (Yeast).